The chain runs to 176 residues: Peroxiredoxin AHP1 (176 aa).

An N-acetylserine modification is found at serine 2. Residues phenylalanine 9 to leucine 176 form the Thioredoxin domain. At serine 28 the chain carries Phosphoserine. Lysine 32 participates in a covalent cross-link: Glycyl lysine isopeptide (Lys-Gly) (interchain with G-Cter in URM1). Residue lysine 48 forms a Glycyl lysine isopeptide (Lys-Gly) (interchain with G-Cter in ubiquitin); alternate linkage. A Glycyl lysine isopeptide (Lys-Gly) (interchain with G-Cter in URM1); alternate cross-link involves residue lysine 48. Residue serine 59 is modified to Phosphoserine. Cysteine 62 (cysteine sulfenic acid (-SOH) intermediate) is an active-site residue. Cysteine 62 is subject to Cysteine persulfide. Lysine 79 is covalently cross-linked (Glycyl lysine isopeptide (Lys-Gly) (interchain with G-Cter in URM1)). Lysine 81 is covalently cross-linked (Glycyl lysine isopeptide (Lys-Gly) (interchain with G-Cter in ubiquitin); alternate). Lysine 81 participates in a covalent cross-link: Glycyl lysine isopeptide (Lys-Gly) (interchain with G-Cter in URM1); alternate. Lysine 107 is covalently cross-linked (Glycyl lysine isopeptide (Lys-Gly) (interchain with G-Cter in URM1)). Lysine 113 is covalently cross-linked (Glycyl lysine isopeptide (Lys-Gly) (interchain with G-Cter in ubiquitin)). Phosphoserine is present on serine 116. Cysteine 120 is modified (cysteine persulfide). A Glycyl lysine isopeptide (Lys-Gly) (interchain with G-Cter in URM1) cross-link involves residue lysine 124. A Glycyl lysine isopeptide (Lys-Gly) (interchain with G-Cter in URM1); alternate cross-link involves residue lysine 156. Lysine 156 participates in a covalent cross-link: Glycyl lysine isopeptide (Lys-Gly) (interchain with G-Cter in SUMO); alternate.

The protein belongs to the peroxiredoxin family. Prx5 subfamily. As to quaternary structure, homodimer; disulfide-linked, upon oxidation. Post-translationally, conjugated to URM1, a ubiquitin-like protein, in response to oxidative stresses. The attachment of URM1 to lysine residues exclusively depends on the presence of a peroxidatic cysteine in the target protein, with low specificity for the particular residue, motif, or structural context at which urmylation can occur. The URM1-conjugation reaction is mechanistically and directly coupled to the process of cysteine persulfidation, transfering the sulfur atom of the URM1 thiocarboxyl group to redox-active cysteine residues in the target protein if it is exposed to oxidative conditions. Persulfidated on specific redox-active cysteine residues. Persulfidation (also called protein S-sulfhydration) may provide a molecular mechanism that enables cells to protect vulnerable cysteine residues from reactive oxygen species (ROS) under stress conditions.

The protein resides in the cytoplasm. The catalysed reaction is a hydroperoxide + [thioredoxin]-dithiol = an alcohol + [thioredoxin]-disulfide + H2O. Functionally, thiol-specific peroxidase that catalyzes the reduction of hydrogen peroxide and organic hydroperoxides to water and alcohols, respectively. Plays a role in cell protection against oxidative stress by detoxifying peroxides and as sensor of hydrogen peroxide-mediated signaling events. Preferentially eliminates organic peroxides rather than hydrogen peroxide. Relays alkyl hydroperoxides as a signal to the transcription factor CAD1/YAP2 by inducing the formation of intramolecular disulfide bonds in CAD1, which causes its nuclear accumulation and activation. Involved in cellular Mn(2+) homeostasis. This Saccharomyces cerevisiae (strain ATCC 204508 / S288c) (Baker's yeast) protein is Peroxiredoxin AHP1.